Reading from the N-terminus, the 316-residue chain is 4-diphosphocytidyl-2-C-methyl-D-erythritol kinase (316 aa).

Residue lysine 32 is part of the active site. ATP is bound at residue 126–136; that stretch reads PVGAGLGGGSA. The active site involves aspartate 168.

Belongs to the GHMP kinase family. IspE subfamily.

The enzyme catalyses 4-CDP-2-C-methyl-D-erythritol + ATP = 4-CDP-2-C-methyl-D-erythritol 2-phosphate + ADP + H(+). It functions in the pathway isoprenoid biosynthesis; isopentenyl diphosphate biosynthesis via DXP pathway; isopentenyl diphosphate from 1-deoxy-D-xylulose 5-phosphate: step 3/6. Functionally, catalyzes the phosphorylation of the position 2 hydroxy group of 4-diphosphocytidyl-2C-methyl-D-erythritol. The polypeptide is 4-diphosphocytidyl-2-C-methyl-D-erythritol kinase (Bifidobacterium longum (strain DJO10A)).